A 409-amino-acid polypeptide reads, in one-letter code: MSAGKLKFDSPAPILKLSKNTGSTPPKVGGTGQASWFQSLKEKKRTGTPPTFEGSGVPDNSNVKPQFQHGYWKRQHRYKPGKGGRKPVADAWYFYYTGTGPFGDLKWGDSNDDVVWVKAKGADTSKIGNYGVRDPDKFDQAPLRFTEGGPDNNYRWDFIALNRGRSRNSSAVTSRENSRPGSRDSSRGRQRSRVDDDLIDRAAKIIMQQQKNGSRISKQKANEMAERKYHKRAIAPGKRIDEVFGQRRKGQAPNFGDDKMIEEGVKDGRLTAMLNLVPTPHACLLGSMVTAKLQPDGLHVRFSFETVVKREDPQFANYSKICDECVDGVGTRPKDDPTPRSRAASKDRNSAPATPKQQRAKKVHKKKEEESSLTEEEEEVNKQLEYDDDVTDIPNKIDWGEGAFDDINI.

2 disordered regions span residues Met-1 to Lys-64 and Arg-167 to Asp-197. An RNA-binding region spans residues Gly-30 to Leu-161. Residues Gly-32–Asp-157 form the CoV N NTD domain. The span at Glu-176–Asp-197 shows a compositional bias: basic and acidic residues. At Ser-192 the chain carries Phosphoserine; by host. In terms of domain architecture, CoV N CTD spans Ser-217–Pro-333. The interval Lys-228–Asp-335 is dimerization. A disulfide bridge connects residues Cys-322 and Cys-325. Residues Asp-327–Ile-409 are disordered. Positions Arg-332–Asn-349 are enriched in basic and acidic residues. Thr-374 bears the Phosphothreonine; by host mark.

Belongs to the gammacoronavirus nucleocapsid protein family. In terms of assembly, homooligomer. Both monomeric and oligomeric forms interact with RNA. Interacts with protein M. Interacts with NSP3; this interaction serves to tether the genome to the newly translated replicase-transcriptase complex at a very early stage of infection. ADP-ribosylated. The ADP-ribosylation is retained in the virion during infection. In terms of processing, phosphorylated on serine and threonine residues.

The protein localises to the virion. Its subcellular location is the host endoplasmic reticulum-Golgi intermediate compartment. The protein resides in the host Golgi apparatus. Its function is as follows. Packages the positive strand viral genome RNA into a helical ribonucleocapsid (RNP) and plays a fundamental role during virion assembly through its interactions with the viral genome and membrane protein M. Plays an important role in enhancing the efficiency of subgenomic viral RNA transcription as well as viral replication. This chain is Nucleoprotein, found in Gallus gallus (Chicken).